A 402-amino-acid chain; its full sequence is NADH-quinone oxidoreductase subunit D (402 aa).

The protein belongs to the complex I 49 kDa subunit family. As to quaternary structure, NDH-1 is composed of 14 different subunits. Subunits NuoB, C, D, E, F, and G constitute the peripheral sector of the complex.

It is found in the cell inner membrane. It catalyses the reaction a quinone + NADH + 5 H(+)(in) = a quinol + NAD(+) + 4 H(+)(out). Functionally, NDH-1 shuttles electrons from NADH, via FMN and iron-sulfur (Fe-S) centers, to quinones in the respiratory chain. The immediate electron acceptor for the enzyme in this species is believed to be ubiquinone. Couples the redox reaction to proton translocation (for every two electrons transferred, four hydrogen ions are translocated across the cytoplasmic membrane), and thus conserves the redox energy in a proton gradient. The protein is NADH-quinone oxidoreductase subunit D of Rhodopseudomonas palustris (strain ATCC BAA-98 / CGA009).